A 105-amino-acid chain; its full sequence is DNA-directed RNA polymerases I and III subunit RPAC2 (105 aa).

This sequence belongs to the archaeal Rpo11/eukaryotic RPB11/RPC19 RNA polymerase subunit family. In terms of assembly, component of the RNA polymerase I (Pol I) and RNA polymerase III (Pol III) complexes consisting of at least 13 and 17 subunits, respectively.

Its subcellular location is the nucleus. Its function is as follows. DNA-dependent RNA polymerase catalyzes the transcription of DNA into RNA using the four ribonucleoside triphosphates as substrates. Common core component of RNA polymerases I and III which synthesize ribosomal RNA precursors and small RNAs, such as 5S rRNA and tRNAs, respectively. This chain is DNA-directed RNA polymerases I and III subunit RPAC2, found in Drosophila melanogaster (Fruit fly).